Consider the following 550-residue polypeptide: Cytochrome P450 monooxygenase hasH (550 aa).

A helical transmembrane segment spans residues 39–59; it reads IGVLASIVVLVTVVIGPKAVI. Cysteine 493 lines the heme pocket.

This sequence belongs to the cytochrome P450 family. It depends on heme as a cofactor.

It is found in the membrane. It functions in the pathway secondary metabolite biosynthesis. Functionally, cytochrome P450 monooxygenase; part of the gene cluster that mediates the biosynthesis of hexadehydro-astechrome (HAS), a tryptophan-derived iron(III)-complex that acts as a virulence factor in infected mice. Within the pathway, hasH, with the O-methyltransferase hasC and the FAD-linked oxidoreductase hasG, convert the hasE-prenylated Trp-Ala dipeptide into an O-methylated diketopiperazine that is then released from the hasD NRPS. The HAS biosynthesis begins with the synthesis of a tethered Trp-Ala dipeptide by the NRPS hasD. The 7-dimethylallyltryptophan synthase hasE then catalyzes the prenylation of the hasD-tethered tryptophan or the resulting tethered Trp-Ala dipeptide at the C-7 position of the indole moiety. HAS biosynthesis continues via tethered intermediates with the succesive action of the cytochrome P450 monooxygenase hasH, the O-methyltransferase hasC, and the FAD-linked oxidoreductase hasG. The resulting O-methylated diketopiperazine is then released from hasD. Finally, three O-methylated diketopiperazine molecules assemble in a trimeric complex with Fe(III) to produce hexadehydro-astechrome. The sequence is that of Cytochrome P450 monooxygenase hasH from Aspergillus fumigatus (strain CBS 144.89 / FGSC A1163 / CEA10) (Neosartorya fumigata).